The sequence spans 78 residues: Large ribosomal subunit protein bL28 (78 aa).

Positions 1 to 23 (MSRVCQVTGKKPMVGNNRSHAKN) are disordered.

The protein belongs to the bacterial ribosomal protein bL28 family.

The protein is Large ribosomal subunit protein bL28 of Shewanella frigidimarina (strain NCIMB 400).